Consider the following 171-residue polypeptide: AN1-type zinc finger protein 2A (171 aa).

AN1-type zinc fingers lie at residues 4-52 (PDLG…KKDV) and 94-142 (KVFT…SSAS). Zn(2+) is bound by residues cysteine 10, cysteine 15, cysteine 25, cysteine 28, cysteine 33, histidine 36, histidine 42, cysteine 44, cysteine 100, cysteine 105, cysteine 115, cysteine 118, cysteine 123, histidine 126, histidine 132, and cysteine 134. The tract at residues 134–171 (CQAGSSSASRGRTSTSRAAEQKPSGVSWLAQRLRRTVK) is disordered. The segment covering 136–151 (AGSSSASRGRTSTSRA) has biased composition (low complexity).

It localises to the cytoplasm. The protein localises to the nucleus. This chain is AN1-type zinc finger protein 2A (Zfand2a), found in Mus musculus (Mouse).